A 149-amino-acid polypeptide reads, in one-letter code: Nucleoside diphosphate kinase (149 aa).

Positions 9, 57, 85, 91, 102, and 112 each coordinate ATP. His115 functions as the Pros-phosphohistidine intermediate in the catalytic mechanism.

Belongs to the NDK family. Requires Mg(2+) as cofactor.

The protein resides in the cytoplasm. It carries out the reaction a 2'-deoxyribonucleoside 5'-diphosphate + ATP = a 2'-deoxyribonucleoside 5'-triphosphate + ADP. It catalyses the reaction a ribonucleoside 5'-diphosphate + ATP = a ribonucleoside 5'-triphosphate + ADP. Functionally, major role in the synthesis of nucleoside triphosphates other than ATP. The ATP gamma phosphate is transferred to the NDP beta phosphate via a ping-pong mechanism, using a phosphorylated active-site intermediate. This Methanococcoides burtonii (strain DSM 6242 / NBRC 107633 / OCM 468 / ACE-M) protein is Nucleoside diphosphate kinase.